A 209-amino-acid chain; its full sequence is Uracil phosphoribosyltransferase (209 aa).

5-phospho-alpha-D-ribose 1-diphosphate is bound by residues R79, R104, and 131–139 (DPMLATGGS). Uracil contacts are provided by residues I194 and 199 to 201 (GDA). D200 contributes to the 5-phospho-alpha-D-ribose 1-diphosphate binding site.

This sequence belongs to the UPRTase family. Mg(2+) serves as cofactor.

The catalysed reaction is UMP + diphosphate = 5-phospho-alpha-D-ribose 1-diphosphate + uracil. Its pathway is pyrimidine metabolism; UMP biosynthesis via salvage pathway; UMP from uracil: step 1/1. With respect to regulation, allosterically activated by GTP. Functionally, catalyzes the conversion of uracil and 5-phospho-alpha-D-ribose 1-diphosphate (PRPP) to UMP and diphosphate. The sequence is that of Uracil phosphoribosyltransferase from Lactobacillus gasseri (strain ATCC 33323 / DSM 20243 / BCRC 14619 / CIP 102991 / JCM 1131 / KCTC 3163 / NCIMB 11718 / NCTC 13722 / AM63).